The chain runs to 613 residues: Proton myo-inositol cotransporter hmit-1.2 (613 aa).

Residues M1–K21 lie on the Cytoplasmic side of the membrane. Residues L22–Y42 form a helical membrane-spanning segment. At D43–E69 the chain is on the extracellular side. Residues V70 to S90 traverse the membrane as a helical segment. Topologically, residues D91 to K96 are cytoplasmic. The helical transmembrane segment at P97–W117 threads the bilayer. Over T118–K119 the chain is Extracellular. A helical transmembrane segment spans residues I120–V140. Topologically, residues P141–V157 are cytoplasmic. The helical transmembrane segment at S158–F178 threads the bilayer. The Extracellular segment spans residues S179 to R189. Residues L190 to P210 form a helical membrane-spanning segment. The Cytoplasmic segment spans residues E211–K279. Residues A280 to L300 form a helical membrane-spanning segment. The Extracellular segment spans residues Y301–T317. Residues I318 to F338 form a helical membrane-spanning segment. Over F339–K347 the chain is Cytoplasmic. The chain crosses the membrane as a helical span at residues L348 to L368. Topologically, residues L369–T472 are extracellular. Residues N372, N451, and N456 are each glycosylated (N-linked (GlcNAc...) asparagine). The chain crosses the membrane as a helical span at residues I473–L493. The Cytoplasmic segment spans residues P494–T515. Residues L516–I536 traverse the membrane as a helical segment. Residues T537–Y539 lie on the Extracellular side of the membrane. A helical transmembrane segment spans residues G540–V560. The Cytoplasmic segment spans residues P561–M613. The tract at residues A594–M613 is disordered. Over residues S602–M613 the composition is skewed to polar residues.

The protein belongs to the major facilitator superfamily. Sugar transporter (TC 2.A.1.1) family. Expressed in the excretory canal cell and in pairs of amphid and sheath glia.

It localises to the cell membrane. Its subcellular location is the perikaryon. It carries out the reaction myo-inositol(out) + H(+)(out) = myo-inositol(in) + H(+)(in). In terms of biological role, h(+)-myo-inositol cotransporter. Probably by promoting the transport of myo-inositol regulates intracellular osmosis in response to hyperosmotic stress. The sequence is that of Proton myo-inositol cotransporter hmit-1.2 from Caenorhabditis elegans.